The chain runs to 270 residues: Formamidopyrimidine-DNA glycosylase (270 aa).

Catalysis depends on P2, which acts as the Schiff-base intermediate with DNA. The active-site Proton donor is E3. The active-site Proton donor; for beta-elimination activity is K58. Positions 91, 110, and 151 each coordinate DNA. An FPG-type zinc finger spans residues 236–270; sequence FVYGRGGEFCKVCGSTLREIRLGQRASVYCPRCQR. The active-site Proton donor; for delta-elimination activity is R260.

The protein belongs to the FPG family. As to quaternary structure, monomer. Zn(2+) serves as cofactor.

The enzyme catalyses Hydrolysis of DNA containing ring-opened 7-methylguanine residues, releasing 2,6-diamino-4-hydroxy-5-(N-methyl)formamidopyrimidine.. It carries out the reaction 2'-deoxyribonucleotide-(2'-deoxyribose 5'-phosphate)-2'-deoxyribonucleotide-DNA = a 3'-end 2'-deoxyribonucleotide-(2,3-dehydro-2,3-deoxyribose 5'-phosphate)-DNA + a 5'-end 5'-phospho-2'-deoxyribonucleoside-DNA + H(+). Involved in base excision repair of DNA damaged by oxidation or by mutagenic agents. Acts as a DNA glycosylase that recognizes and removes damaged bases. Has a preference for oxidized purines, such as 7,8-dihydro-8-oxoguanine (8-oxoG). Has AP (apurinic/apyrimidinic) lyase activity and introduces nicks in the DNA strand. Cleaves the DNA backbone by beta-delta elimination to generate a single-strand break at the site of the removed base with both 3'- and 5'-phosphates. This Pseudomonas paraeruginosa (strain DSM 24068 / PA7) (Pseudomonas aeruginosa (strain PA7)) protein is Formamidopyrimidine-DNA glycosylase.